We begin with the raw amino-acid sequence, 699 residues long: Integrator complex subunit 10 (699 aa).

Phosphoserine is present on residues Ser-220 and Ser-370. Lys-453 participates in a covalent cross-link: Glycyl lysine isopeptide (Lys-Gly) (interchain with G-Cter in SUMO2).

The protein belongs to the Integrator subunit 10 family. As to quaternary structure, component of the Integrator complex, composed of core subunits INTS1, INTS2, INTS3, INTS4, INTS5, INTS6, INTS7, INTS8, INTS9/RC74, INTS10, INTS11/CPSF3L, INTS12, INTS13, INTS14 and INTS15. The core complex associates with protein phosphatase 2A subunits PPP2CA and PPP2R1A, to form the Integrator-PP2A (INTAC) complex. INTS10 is part of the tail subcomplex, composed of INTS10, INTS13, INTS14 and INTS15.

It is found in the nucleus. Component of the integrator complex, a multiprotein complex that terminates RNA polymerase II (Pol II) transcription in the promoter-proximal region of genes. The integrator complex provides a quality checkpoint during transcription elongation by driving premature transcription termination of transcripts that are unfavorably configured for transcriptional elongation: the complex terminates transcription by (1) catalyzing dephosphorylation of the C-terminal domain (CTD) of Pol II subunit POLR2A/RPB1 and SUPT5H/SPT5, (2) degrading the exiting nascent RNA transcript via endonuclease activity and (3) promoting the release of Pol II from bound DNA. The integrator complex is also involved in terminating the synthesis of non-coding Pol II transcripts, such as enhancer RNAs (eRNAs), small nuclear RNAs (snRNAs), telomerase RNAs and long non-coding RNAs (lncRNAs). Within the integrator complex, INTS10 is part of the integrator tail module that acts as a platform for the recruitment of transcription factors at promoters. May be not involved in the recruitment of cytoplasmic dynein to the nuclear envelope, probably as component of the integrator complex. The protein is Integrator complex subunit 10 (INTS10) of Macaca fascicularis (Crab-eating macaque).